Reading from the N-terminus, the 166-residue chain is PTS system glucose-specific EIIA component (166 aa).

Positions 34–138 (DPVFAQKMMG…SIISPIIITN (105 aa)) constitute a PTS EIIA type-1 domain. Residues His-71 and His-86 each contribute to the Zn(2+) site. His-86 serves as the catalytic Tele-phosphohistidine intermediate; for EIIA activity. His-86 is subject to Phosphohistidine; by HPr.

In terms of assembly, heterodimer with glycerol kinase (glpk). Zn(2+) serves as cofactor.

The protein resides in the cytoplasm. Its function is as follows. The phosphoenolpyruvate-dependent sugar phosphotransferase system (sugar PTS), a major carbohydrate active transport system, catalyzes the phosphorylation of incoming sugar substrates concomitantly with their translocation across the cell membrane. The enzyme II complex composed of PtsG and Crr is involved in glucose transport. In Staphylococcus epidermidis (strain ATCC 35984 / DSM 28319 / BCRC 17069 / CCUG 31568 / BM 3577 / RP62A), this protein is PTS system glucose-specific EIIA component (crr).